A 164-amino-acid polypeptide reads, in one-letter code: MNVDFIAGINNLGEKIYTCEPFKTSFQNPFIVALIITAVVLVVFFAICNPPVDKKRKTKTAIYIYICIVALLFLHYYVLNHQLNDIYNKSNMDVIVSSIHDKYKGGDEIIPPVSPPSVPDELEEDRPKMIPAGSKPADFKPAEPAVSKPLIPLQEVIMPSQYNN.

Transmembrane regions (helical) follow at residues 28–48 and 60–80; these read NPFI…FAIC and TAIY…YVLN. N-linked (GlcNAc...) asparagine; by host glycosylation occurs at asparagine 88. The tract at residues 114–142 is disordered; that stretch reads SPPSVPDELEEDRPKMIPAGSKPADFKPA.

Belongs to the asfivirus B169L family.

It is found in the host membrane. Its subcellular location is the virion. The polypeptide is Transmembrane protein B169L (Ornithodoros (relapsing fever ticks)).